We begin with the raw amino-acid sequence, 356 residues long: Branched-chain-amino-acid transaminase 1 (356 aa).

K197 carries the N6-(pyridoxal phosphate)lysine modification.

The protein belongs to the class-IV pyridoxal-phosphate-dependent aminotransferase family. Pyridoxal 5'-phosphate serves as cofactor.

It carries out the reaction L-leucine + 2-oxoglutarate = 4-methyl-2-oxopentanoate + L-glutamate. The enzyme catalyses L-isoleucine + 2-oxoglutarate = (S)-3-methyl-2-oxopentanoate + L-glutamate. It catalyses the reaction L-valine + 2-oxoglutarate = 3-methyl-2-oxobutanoate + L-glutamate. The protein operates within amino-acid biosynthesis; L-isoleucine biosynthesis; L-isoleucine from 2-oxobutanoate: step 4/4. It participates in amino-acid biosynthesis; L-leucine biosynthesis; L-leucine from 3-methyl-2-oxobutanoate: step 4/4. Its pathway is amino-acid biosynthesis; L-valine biosynthesis; L-valine from pyruvate: step 4/4. Its activity is regulated as follows. Inhibited by canaline. In terms of biological role, transaminates branched-chain amino acids and ketoglutarate. Involved in the final step of the methionine regeneration pathway, where ketomethiobutyrate (KMTB) is converted to methionine via a transamination. The amino donor preference is isoleucine, leucine, valine, phenylalanine, and tyrosine. In Bacillus subtilis (strain 168), this protein is Branched-chain-amino-acid transaminase 1 (ilvE).